A 387-amino-acid polypeptide reads, in one-letter code: uncharacterized protein (387 aa).

The chain crosses the membrane as a helical span at residues 5–25 (FVLFSFPFLLLSSMLIFYQTT).

It belongs to the LicD transferase family.

It localises to the membrane. This is an uncharacterized protein from Caenorhabditis elegans.